Reading from the N-terminus, the 134-residue chain is Phosphomevalonate dehydratase small subunit (134 aa).

Serine 62 acts as the Proton acceptor in catalysis.

Belongs to the AcnX type II small subunit family. As to quaternary structure, heterodimer composed of a large subunit (PMDh-L) and a small subunit (PMDh-S).

It catalyses the reaction (R)-5-phosphomevalonate = (2E)-3-methyl-5-phosphooxypent-2-enoate + H2O. Its pathway is isoprenoid biosynthesis; isopentenyl diphosphate biosynthesis via mevalonate pathway. Component of a hydro-lyase that catalyzes the dehydration of mevalonate 5-phosphate (MVA5P) to form trans-anhydromevalonate 5-phosphate (tAHMP). Involved in the archaeal mevalonate (MVA) pathway, which provides fundamental precursors for isoprenoid biosynthesis, such as isopentenyl diphosphate (IPP) and dimethylallyl diphosphate (DMAPP). This Pyrococcus furiosus (strain ATCC 43587 / DSM 3638 / JCM 8422 / Vc1) protein is Phosphomevalonate dehydratase small subunit.